Reading from the N-terminus, the 257-residue chain is NAD kinase (257 aa).

The Proton acceptor role is filled by Asp-44. NAD(+)-binding positions include 44–45 (DG), Arg-49, 116–117 (NE), Asp-146, Ala-154, and 157–162 (TAYNLS).

It belongs to the NAD kinase family. A divalent metal cation is required as a cofactor.

It is found in the cytoplasm. It carries out the reaction NAD(+) + ATP = ADP + NADP(+) + H(+). Its function is as follows. Involved in the regulation of the intracellular balance of NAD and NADP, and is a key enzyme in the biosynthesis of NADP. Catalyzes specifically the phosphorylation on 2'-hydroxyl of the adenosine moiety of NAD to yield NADP. The polypeptide is NAD kinase (Rhizorhabdus wittichii (strain DSM 6014 / CCUG 31198 / JCM 15750 / NBRC 105917 / EY 4224 / RW1) (Sphingomonas wittichii)).